The sequence spans 134 residues: Small ribosomal subunit protein uS8c (134 aa).

The protein belongs to the universal ribosomal protein uS8 family. As to quaternary structure, part of the 30S ribosomal subunit.

Its subcellular location is the plastid. It is found in the chloroplast. Its function is as follows. One of the primary rRNA binding proteins, it binds directly to 16S rRNA central domain where it helps coordinate assembly of the platform of the 30S subunit. The chain is Small ribosomal subunit protein uS8c (rps8) from Lactuca sativa (Garden lettuce).